The sequence spans 59 residues: UPF0181 protein YoaH (59 aa).

Belongs to the UPF0181 family.

In Shigella flexneri serotype 5b (strain 8401), this protein is UPF0181 protein YoaH.